Consider the following 351-residue polypeptide: S-adenosylmethionine:tRNA ribosyltransferase-isomerase (351 aa).

The protein belongs to the QueA family. In terms of assembly, monomer.

It localises to the cytoplasm. The catalysed reaction is 7-aminomethyl-7-carbaguanosine(34) in tRNA + S-adenosyl-L-methionine = epoxyqueuosine(34) in tRNA + adenine + L-methionine + 2 H(+). The protein operates within tRNA modification; tRNA-queuosine biosynthesis. Functionally, transfers and isomerizes the ribose moiety from AdoMet to the 7-aminomethyl group of 7-deazaguanine (preQ1-tRNA) to give epoxyqueuosine (oQ-tRNA). This is S-adenosylmethionine:tRNA ribosyltransferase-isomerase from Hyphomonas neptunium (strain ATCC 15444).